Here is a 147-residue protein sequence, read N- to C-terminus: MRSLLILVLCFLPLAALGKVFGRCELAAAMKRHGLDNYRGYSLGNWVCAAKFESNFNTQATNRNTDGSTDYGILQINSRWWCNDGRTPGSRNLCNIPCSALLSSDITASVNCAKKIVSDGNGMNAWVAWRNRCKGTDVQAWIRGCRL.

A signal peptide spans 1–18; that stretch reads MRSLLILVLCFLPLAALG. The C-type lysozyme domain occupies 19-147; the sequence is KVFGRCELAA…VQAWIRGCRL (129 aa). 4 disulfide bridges follow: Cys-24-Cys-145, Cys-48-Cys-133, Cys-82-Cys-98, and Cys-94-Cys-112. Residues Glu-53 and Asp-70 contribute to the active site. Asp-119 contributes to the substrate binding site.

Belongs to the glycosyl hydrolase 22 family. Monomer. As to expression, in the egg white and polymorphonuclear leukocytes.

The protein resides in the secreted. The enzyme catalyses Hydrolysis of (1-&gt;4)-beta-linkages between N-acetylmuramic acid and N-acetyl-D-glucosamine residues in a peptidoglycan and between N-acetyl-D-glucosamine residues in chitodextrins.. Lysozymes have primarily a bacteriolytic function; those in tissues and body fluids are associated with the monocyte-macrophage system and enhance the activity of immunoagents. Has bacteriolytic activity against M.luteus. The protein is Lysozyme C (LYZ) of Gallus gallus (Chicken).